A 388-amino-acid chain; its full sequence is Protein kes1 (388 aa).

This sequence belongs to the OSBP family.

Lipid transporter involved in lipid countertransport between the Golgi complex and membranes of the endoplasmic reticulum: specifically exchanges sterol with phosphatidylinositol 4-phosphate (PI4P), delivering sterol to the Golgi in exchange for PI4P, which is degraded by the SAC1 phosphatase in the endoplasmic reticulum. This is Protein kes1 (kes1) from Schizosaccharomyces pombe (strain 972 / ATCC 24843) (Fission yeast).